Reading from the N-terminus, the 478-residue chain is Glycogen synthase (478 aa).

Residue Lys16 coordinates ADP-alpha-D-glucose.

The protein belongs to the glycosyltransferase 1 family. Bacterial/plant glycogen synthase subfamily.

It catalyses the reaction [(1-&gt;4)-alpha-D-glucosyl](n) + ADP-alpha-D-glucose = [(1-&gt;4)-alpha-D-glucosyl](n+1) + ADP + H(+). Its pathway is glycan biosynthesis; glycogen biosynthesis. Synthesizes alpha-1,4-glucan chains using ADP-glucose. This chain is Glycogen synthase, found in Lachnospira eligens (strain ATCC 27750 / DSM 3376 / VPI C15-48 / C15-B4) (Eubacterium eligens).